A 174-amino-acid polypeptide reads, in one-letter code: Ribosome maturation factor RimM (174 aa).

Residues 97–173 (GNKFYFHEVI…DLPVGLVEMY (77 aa)) form the PRC barrel domain.

Belongs to the RimM family. Binds ribosomal protein uS19.

Its subcellular location is the cytoplasm. Its function is as follows. An accessory protein needed during the final step in the assembly of 30S ribosomal subunit, possibly for assembly of the head region. Essential for efficient processing of 16S rRNA. May be needed both before and after RbfA during the maturation of 16S rRNA. It has affinity for free ribosomal 30S subunits but not for 70S ribosomes. This is Ribosome maturation factor RimM from Flavobacterium johnsoniae (strain ATCC 17061 / DSM 2064 / JCM 8514 / BCRC 14874 / CCUG 350202 / NBRC 14942 / NCIMB 11054 / UW101) (Cytophaga johnsonae).